The following is a 671-amino-acid chain: MRAVSDFLKNKWVAVPAVALLILSLGFLAQNYITGSFVSGDQIEYTSNSEFFDGEVFVINYIGDRTTDKIHAEIPASELASAADGEVTKELTIDITSQETYARYSTTSTSLSRIYAFKAINSEVFTDTSSSEVESRKQSWAEQNCYDIDGDSEIEQGDDYTQRFWVDGAIADYYNAQVYCVRENGYYGNIAELSSPDKEFEAEVEVKADGETPQSTTLSNSDLGQGRCDNIGEYVRACWTGLNPTGEGVPEPYNVYAIHSNTFSPEWRVISAERYSSYNSYVENNLYSQIEAWKEGSLSQEEVVSTANDQAAQAAQRVSSGSFTDYQVEDSSYENGQIRLNPSYDIAWPEFTFYVDGADYISVEKPVGEPRIVNVEGDEFGEKQSGTVTAEVENTASYEGSFSARVSKCSDSFGYDSLQETKTVGPGETVSFDFRVSFTSDSFDQKTVSGSCEIVVSDTGDSSNSDTAVVDVEATQSNECTPNEEFVRTINSTHSRILECSSDGLTTTEVDVCGDGEEAAFRDSSWTCVSDGTLPGGGDGSGGSGGGGDTDDCVVFAVGDLEIEDPFCADGPLEMLSKMFHLVAGTAVAFFTGSLGYRAGRWVDGEYQIKGGFDPLKSRSVSRAKRGRFLIGLIAELVSFLLGFYVILLVPIWAQLMVILGYVLFKYYTPF.

The Cytoplasmic portion of the chain corresponds to 1 to 12 (MRAVSDFLKNKW). The helical transmembrane segment at 13 to 33 (VAVPAVALLILSLGFLAQNYI) threads the bilayer. The Extracellular portion of the chain corresponds to 34–574 (TGSFVSGDQI…DPFCADGPLE (541 aa)). 4 cysteine pairs are disulfide-bonded: cysteine 145–cysteine 180, cysteine 409–cysteine 452, cysteine 480–cysteine 500, and cysteine 513–cysteine 528. The segment at 168-173 (GAIADY) is fusion loop. Residues 575-595 (MLSKMFHLVAGTAVAFFTGSL) form a helical membrane-spanning segment. The Cytoplasmic portion of the chain corresponds to 596-628 (GYRAGRWVDGEYQIKGGFDPLKSRSVSRAKRGR). The helical transmembrane segment at 629–649 (FLIGLIAELVSFLLGFYVILL) threads the bilayer. A topological domain (extracellular) is located at residue valine 650. The chain crosses the membrane as a helical span at residues 651-671 (PIWAQLMVILGYVLFKYYTPF).

It belongs to the HAP2/GCS1 family. Fusexin 1 subfamily. As to quaternary structure, homotrimer stabilized by interdomain contacts and numerous Ca(2+) and Na(+) ions.

The protein resides in the cell surface. The protein localises to the cell membrane. Exhibits fusogenic activity. Mediates cell-cell fusion in mammalian cells (bilateral fusion). The polypeptide is Fusexin 1 (Natrinema altunense (strain JCM 12890 / CGMCC 1.3731 / AJ2)).